We begin with the raw amino-acid sequence, 57 residues long: uncharacterized protein (57 aa).

The interval 1-57 is disordered; that stretch reads MITPIGKNSNSNSNSNSNSNSNSNSNSNSNSNSNSNSNSNSNSNSNSNSNSNSNSNN. A compositionally biased stretch (low complexity) spans 8–57; the sequence is NSNSNSNSNSNSNSNSNSNSNSNSNSNSNSNSNSNSNSNSNSNSNSNSNN.

This is an uncharacterized protein from Dictyostelium discoideum (Social amoeba).